A 151-amino-acid chain; its full sequence is MHALQAKILDPRIGNEFPLPAYATPGSAGLDLRAMLKEDTVLEPGQTLLIPTGLSIYVGDPGLAALILPRSGLGHKHGIVLGNLVGLIDSDYQGELMVSCWNRGQTAFNIAVGERIAQLVLVPVVQAHFELVEEFDETQRGAGGFGHSGSH.

Substrate-binding positions include 70 to 72, Asn-83, 87 to 89, and Met-97; these read RSG and LID.

It belongs to the dUTPase family. The cofactor is Mg(2+).

The catalysed reaction is dUTP + H2O = dUMP + diphosphate + H(+). It participates in pyrimidine metabolism; dUMP biosynthesis; dUMP from dCTP (dUTP route): step 2/2. In terms of biological role, this enzyme is involved in nucleotide metabolism: it produces dUMP, the immediate precursor of thymidine nucleotides and it decreases the intracellular concentration of dUTP so that uracil cannot be incorporated into DNA. This is Deoxyuridine 5'-triphosphate nucleotidohydrolase from Pseudomonas fluorescens (strain SBW25).